Reading from the N-terminus, the 340-residue chain is GTPase Obg (340 aa).

The Obg domain maps to 1-158 (MSFIDEAKVY…KWIILKLKII (158 aa)). The region spanning 159–325 (SDVGIIGLPN…LSILIKHINK (167 aa)) is the OBG-type G domain. GTP-binding positions include 165 to 172 (GLPNAGKS), 190 to 194 (FTTLE), 211 to 214 (DIPG), 278 to 281 (NKCD), and 306 to 308 (SSI). The Mg(2+) site is built by S172 and T192.

Belongs to the TRAFAC class OBG-HflX-like GTPase superfamily. OBG GTPase family. In terms of assembly, monomer. It depends on Mg(2+) as a cofactor.

It localises to the cytoplasm. In terms of biological role, an essential GTPase which binds GTP, GDP and possibly (p)ppGpp with moderate affinity, with high nucleotide exchange rates and a fairly low GTP hydrolysis rate. Plays a role in control of the cell cycle, stress response, ribosome biogenesis and in those bacteria that undergo differentiation, in morphogenesis control. The sequence is that of GTPase Obg from Ehrlichia ruminantium (strain Gardel).